We begin with the raw amino-acid sequence, 310 residues long: Methionyl-tRNA formyltransferase (310 aa).

109–112 (SLLP) is a binding site for (6S)-5,6,7,8-tetrahydrofolate.

This sequence belongs to the Fmt family.

The enzyme catalyses L-methionyl-tRNA(fMet) + (6R)-10-formyltetrahydrofolate = N-formyl-L-methionyl-tRNA(fMet) + (6S)-5,6,7,8-tetrahydrofolate + H(+). Its function is as follows. Attaches a formyl group to the free amino group of methionyl-tRNA(fMet). The formyl group appears to play a dual role in the initiator identity of N-formylmethionyl-tRNA by promoting its recognition by IF2 and preventing the misappropriation of this tRNA by the elongation apparatus. This chain is Methionyl-tRNA formyltransferase, found in Alkaliphilus oremlandii (strain OhILAs) (Clostridium oremlandii (strain OhILAs)).